The following is a 183-amino-acid chain: Apo-citrate lyase phosphoribosyl-dephospho-CoA transferase (183 aa).

This sequence belongs to the CitX family.

The catalysed reaction is apo-[citrate lyase ACP] + 2'-(5''-triphospho-alpha-D-ribosyl)-3'-dephospho-CoA = holo-[citrate lyase ACP] + diphosphate. Functionally, transfers 2-(5''-triphosphoribosyl)-3'-dephosphocoenzyme-A on a serine residue to the apo-acyl carrier protein (gamma chain) of the citrate lyase to yield holo-acyl carrier protein. The protein is Apo-citrate lyase phosphoribosyl-dephospho-CoA transferase of Escherichia coli (strain SMS-3-5 / SECEC).